Consider the following 151-residue polypeptide: Large ribosomal subunit protein bL9 (151 aa).

This sequence belongs to the bacterial ribosomal protein bL9 family.

Functionally, binds to the 23S rRNA. This is Large ribosomal subunit protein bL9 from Lactobacillus johnsonii (strain CNCM I-12250 / La1 / NCC 533).